Reading from the N-terminus, the 304-residue chain is Ribosomal RNA small subunit methyltransferase H (304 aa).

Residues 37–39, Asp57, Phe79, Asp100, and His107 contribute to the S-adenosyl-L-methionine site; that span reads GGH.

The protein belongs to the methyltransferase superfamily. RsmH family.

It is found in the cytoplasm. It carries out the reaction cytidine(1402) in 16S rRNA + S-adenosyl-L-methionine = N(4)-methylcytidine(1402) in 16S rRNA + S-adenosyl-L-homocysteine + H(+). Its function is as follows. Specifically methylates the N4 position of cytidine in position 1402 (C1402) of 16S rRNA. This Bacteroides fragilis (strain ATCC 25285 / DSM 2151 / CCUG 4856 / JCM 11019 / LMG 10263 / NCTC 9343 / Onslow / VPI 2553 / EN-2) protein is Ribosomal RNA small subunit methyltransferase H.